A 132-amino-acid polypeptide reads, in one-letter code: Large ribosomal subunit protein bL17 (132 aa).

The protein belongs to the bacterial ribosomal protein bL17 family. As to quaternary structure, part of the 50S ribosomal subunit. Contacts protein L32.

This chain is Large ribosomal subunit protein bL17, found in Ralstonia pickettii (strain 12J).